The chain runs to 61 residues: MDTKLLDILACPICKGPLKLSADKTELISKGAGLAYPIRDGIPVMLESEARTLTTEERLDK.

Belongs to the UPF0434 family.

This Pseudomonas fluorescens (strain ATCC BAA-477 / NRRL B-23932 / Pf-5) protein is UPF0434 protein PFL_1779.